The primary structure comprises 621 residues: Pentatricopeptide repeat-containing protein At3g48250, chloroplastic (621 aa).

The transit peptide at 1 to 67 (MYRSMAILSS…SKPDSMLQLV (67 aa)) directs the protein to the chloroplast. PPR repeat units follow at residues 122–156 (STPL…GFYL), 157–194 (DEDT…NAMS), 262–296 (STVT…GYDM), 297–331 (DLDT…PFKP), 332–368 (SIQD…GKSL), 369–403 (SKAV…GYEP), 404–438 (DNIT…GCFP), 439–473 (DIKT…GFDI), 474–509 (DSNL…NVKP), and 510–544 (WQST…NYPA).

Belongs to the PPR family. P subfamily.

The protein localises to the plastid. It is found in the chloroplast. This Arabidopsis thaliana (Mouse-ear cress) protein is Pentatricopeptide repeat-containing protein At3g48250, chloroplastic.